Here is a 618-residue protein sequence, read N- to C-terminus: DNA mismatch repair protein MutL (618 aa).

The span at 367–378 (EPTAAREPATPR) shows a compositional bias: low complexity. A disordered region spans residues 367-402 (EPTAAREPATPRYSGGASGGNGGRQTAGGWPHAQPG). The span at 382–392 (GASGGNGGRQT) shows a compositional bias: gly residues.

This sequence belongs to the DNA mismatch repair MutL/HexB family.

This protein is involved in the repair of mismatches in DNA. It is required for dam-dependent methyl-directed DNA mismatch repair. May act as a 'molecular matchmaker', a protein that promotes the formation of a stable complex between two or more DNA-binding proteins in an ATP-dependent manner without itself being part of a final effector complex. The polypeptide is DNA mismatch repair protein MutL (Salmonella choleraesuis (strain SC-B67)).